The following is a 136-amino-acid chain: Large ribosomal subunit protein bL17 (136 aa).

This sequence belongs to the bacterial ribosomal protein bL17 family. Part of the 50S ribosomal subunit. Contacts protein L32.

This chain is Large ribosomal subunit protein bL17, found in Rhodopseudomonas palustris (strain BisA53).